The primary structure comprises 421 residues: Telomeric repeat-binding factor 1 (421 aa).

The interval 1 to 30 (MAETVSSAARDAPSREGWTDSDSPEQEEVG) is disordered. Alanine 2 carries the N-acetylalanine modification. Residues 49 to 255 (ENAELVAEVE…AATKVVENEK (207 aa)) are TRFH mediates dimerization. Residue lysine 200 forms a Glycyl lysine isopeptide (Lys-Gly) (interchain with G-Cter in SUMO2) linkage. The residue at position 206 (serine 206) is a Phosphoserine; by ATM. The tract at residues 252–365 (ENEKARTQAS…PDTDDKSGRR (114 aa)) is interaction with RLIM. Basic and acidic residues predominate over residues 253–266 (NEKARTQASKDRPD). Positions 253–366 (NEKARTQASK…DTDDKSGRRK (114 aa)) are disordered. Over residues 284–310 (VNGQQSTETEPLVDTVSSIRSHKNALS) the composition is skewed to polar residues. Residues 313–367 (KHRRAPSDFSRNEARTGTLQCETTMERNRRTSGRNRLCVSENQPDTDDKSGRRKR) carry the Nuclear localization signal motif. The 58-residue stretch at 362–419 (SGRRKRQTWLWEEDRILKCGVKKYGEGNWAKILSHYKFNNRTSVMLKDRWRTMKRLKL) folds into the HTH myb-type domain. The H-T-H motif DNA-binding region spans 390-415 (WAKILSHYKFNNRTSVMLKDRWRTMK).

In terms of assembly, homodimer; can contain both isoforms. Found in a complex with POT1; TINF2 and TNKS1. Interacts with ATM, TINF2, TNKS1, TNKS2, PINX1, NEK2 and MAPRE1. Component of the shelterin complex (telosome) composed of TERF1, TERF2, TINF2, TERF2IP ACD and POT1. Interacts with RLIM (via N-terminus). Interacts with FBXO4. Interaction with TINF2 protects against interaction with FBXO4 and subsequent polyubiquitination and proteasomal degradation. Interacts with GNL3L; this interaction promotes homodimerization. Interacts with TIN2. Interactions with GNL3L and TIN2 are mutually exclusive. Interacts with RTEL1. Interacts with CCDC79/TERB1. Phosphorylated preferentially on Ser-219 in an ATM-dependent manner in response to ionizing DNA damage. Post-translationally, ADP-ribosylation by TNKS1 or TNKS2 diminishes its ability to bind to telomeric DNA. In terms of processing, ubiquitinated by RLIM/RNF12, leading to its degradation by the proteasome. Ubiquitinated by a SCF (SKP1-CUL1-F-box protein) ubiquitin-protein ligase complex, leading to its degradation by the proteasome.

It localises to the nucleus. The protein localises to the chromosome. The protein resides in the telomere. It is found in the cytoplasm. Its subcellular location is the cytoskeleton. It localises to the spindle. Its function is as follows. Binds the telomeric double-stranded 5'-TTAGGG-3' repeat and negatively regulates telomere length. Involved in the regulation of the mitotic spindle. Component of the shelterin complex (telosome) that is involved in the regulation of telomere length and protection. Shelterin associates with arrays of double-stranded 5'-TTAGGG-3' repeats added by telomerase and protects chromosome ends; without its protective activity, telomeres are no longer hidden from the DNA damage surveillance and chromosome ends are inappropriately processed by DNA repair pathways. The polypeptide is Telomeric repeat-binding factor 1 (Terf1) (Mus musculus (Mouse)).